Here is a 281-residue protein sequence, read N- to C-terminus: Bifunctional protein FolD (281 aa).

Residues 165 to 167, T192, and V233 contribute to the NADP(+) site; that span reads GRG.

It belongs to the tetrahydrofolate dehydrogenase/cyclohydrolase family. In terms of assembly, homodimer.

The catalysed reaction is (6R)-5,10-methylene-5,6,7,8-tetrahydrofolate + NADP(+) = (6R)-5,10-methenyltetrahydrofolate + NADPH. It carries out the reaction (6R)-5,10-methenyltetrahydrofolate + H2O = (6R)-10-formyltetrahydrofolate + H(+). The protein operates within one-carbon metabolism; tetrahydrofolate interconversion. In terms of biological role, catalyzes the oxidation of 5,10-methylenetetrahydrofolate to 5,10-methenyltetrahydrofolate and then the hydrolysis of 5,10-methenyltetrahydrofolate to 10-formyltetrahydrofolate. The protein is Bifunctional protein FolD of Corynebacterium diphtheriae (strain ATCC 700971 / NCTC 13129 / Biotype gravis).